Consider the following 327-residue polypeptide: Thiosulfate dehydrogenase (327 aa).

The N-terminal stretch at Met-1–Gly-26 is a signal peptide. A compositionally biased stretch (low complexity) spans Asn-66–Ala-78. Residues Asn-66–Pro-93 are disordered. 2 consecutive Cytochrome c domains span residues Ala-99–Ser-196 and Pro-219–Pro-305. Heme c-binding residues include Cys-125, Cys-128, His-129, Cys-232, Cys-235, and His-236.

As to quaternary structure, monomer. In terms of processing, binds 2 heme c groups covalently per subunit.

Its subcellular location is the periplasm. The catalysed reaction is 2 thiosulfate + 2 Fe(III)-[cytochrome c] = tetrathionate + 2 Fe(II)-[cytochrome c] + 2 H(+). Catalyzes the oxidation of 2 molecules of thiosulfate to tetrathionate. The sequence is that of Thiosulfate dehydrogenase (tsdA) from Psychrobacter arcticus (strain DSM 17307 / VKM B-2377 / 273-4).